We begin with the raw amino-acid sequence, 340 residues long: tRNA dimethylallyltransferase (340 aa).

The interval 1-25 (MDQNRSPNGRDCREPPSPSSTARPG) is disordered. 31 to 38 (GPTATGKS) contacts ATP. 33-38 (TATGKS) is a substrate binding site. The interval 56–59 (DSRQ) is interaction with substrate tRNA.

It belongs to the IPP transferase family. In terms of assembly, monomer. Mg(2+) serves as cofactor.

The enzyme catalyses adenosine(37) in tRNA + dimethylallyl diphosphate = N(6)-dimethylallyladenosine(37) in tRNA + diphosphate. Catalyzes the transfer of a dimethylallyl group onto the adenine at position 37 in tRNAs that read codons beginning with uridine, leading to the formation of N6-(dimethylallyl)adenosine (i(6)A). In Synechococcus sp. (strain JA-3-3Ab) (Cyanobacteria bacterium Yellowstone A-Prime), this protein is tRNA dimethylallyltransferase.